Consider the following 250-residue polypeptide: Pyrroloquinoline-quinone synthase (250 aa).

It belongs to the PqqC family.

It carries out the reaction 6-(2-amino-2-carboxyethyl)-7,8-dioxo-1,2,3,4,7,8-hexahydroquinoline-2,4-dicarboxylate + 3 O2 = pyrroloquinoline quinone + 2 H2O2 + 2 H2O + H(+). It participates in cofactor biosynthesis; pyrroloquinoline quinone biosynthesis. Functionally, ring cyclization and eight-electron oxidation of 3a-(2-amino-2-carboxyethyl)-4,5-dioxo-4,5,6,7,8,9-hexahydroquinoline-7,9-dicarboxylic-acid to PQQ. This chain is Pyrroloquinoline-quinone synthase, found in Xanthomonas oryzae pv. oryzae (strain PXO99A).